Here is a 168-residue protein sequence, read N- to C-terminus: Small ribosomal subunit protein uS5c (168 aa).

The S5 DRBM domain maps to 17 to 80; it reads WQERVVQIRR…SDGKKKIVSV (64 aa).

The protein belongs to the universal ribosomal protein uS5 family. Part of the 30S ribosomal subunit. Contacts protein S4.

The protein resides in the plastid. The protein localises to the chloroplast. Functionally, with S4 and S12 plays an important role in translational accuracy. In Rhodomonas salina (Cryptomonas salina), this protein is Small ribosomal subunit protein uS5c (rps5).